The sequence spans 409 residues: Elongation factor Tu, plastid (409 aa).

The tr-type G domain occupies 10-214; the sequence is KPHINIGTIG…KIDSYIPTPI (205 aa). The interval 19-26 is G1; that stretch reads GHVDHGKT. Position 19 to 26 (19 to 26) interacts with GTP; the sequence is GHVDHGKT. A Mg(2+)-binding site is contributed by Thr-26. The interval 60 to 64 is G2; sequence GITIN. The segment at 81–84 is G3; that stretch reads DCPG. Residues 81 to 85 and 136 to 139 contribute to the GTP site; these read DCPGH and NKED. A G4 region spans residues 136-139; sequence NKED. The interval 174–176 is G5; that stretch reads SAL.

Belongs to the TRAFAC class translation factor GTPase superfamily. Classic translation factor GTPase family. EF-Tu/EF-1A subfamily.

It localises to the plastid. It catalyses the reaction GTP + H2O = GDP + phosphate + H(+). GTP hydrolase that promotes the GTP-dependent binding of aminoacyl-tRNA to the A-site of ribosomes during protein biosynthesis. This chain is Elongation factor Tu, plastid (tufA), found in Euglena longa (Euglenophycean alga).